Consider the following 301-residue polypeptide: uncharacterized protein (301 aa).

An FHA domain is found at Tyr-27–Leu-85. Positions Thr-187–Ser-236 are disordered. Position 204 is a phosphoserine (Ser-204). The segment covering Lys-216–Leu-226 has biased composition (basic and acidic residues). Position 231 is a phosphoserine (Ser-231).

As to quaternary structure, interacts with sad1.

The protein resides in the nucleus. This is an uncharacterized protein from Schizosaccharomyces pombe (strain 972 / ATCC 24843) (Fission yeast).